The sequence spans 125 residues: Scinderin (125 aa).

Y13 is subject to Phosphotyrosine. A 1,2-diacyl-sn-glycero-3-phospho-(1D-myo-inositol-4,5-bisphosphate)-binding positions include 23–30 and 49–57; these read KGGLKYKA and RLLHVKGRR. A Gelsolin-like 1 repeat occupies 59–99; the sequence is VRATEVPLSWDSFNKGDCFIIDLGSEIYQWFGSSCNKYERL.

The protein belongs to the villin/gelsolin family.

It localises to the cytoplasm. Its subcellular location is the cytoskeleton. The protein localises to the cell projection. It is found in the podosome. In terms of biological role, ca(2+)-dependent actin filament-severing protein that has a regulatory function in exocytosis by affecting the organization of the microfilament network underneath the plasma membrane. In vitro, also has barbed end capping and nucleating activities in the presence of Ca(2+). Severing activity is inhibited by phosphatidylinositol 4,5-bis-phosphate (PIP2). Required for megakaryocyte differentiation, maturation, polyploidization and apoptosis with the release of platelet-like particles. Plays a role in osteoclastogenesis (OCG) and actin cytoskeletal organization in osteoclasts. Regulates chondrocyte proliferation and differentiation. Inhibits cell proliferation and tumorigenesis. Signaling is mediated by MAPK, p38 and JNK pathways. The chain is Scinderin (SCIN) from Sus scrofa (Pig).